The primary structure comprises 637 residues: CREB-regulated transcription coactivator 3 (637 aa).

At Ser-66 the chain carries Phosphoserine. The segment covering 105-115 has biased composition (basic residues); the sequence is NRLHSSHHRPI. 2 disordered regions span residues 105–184 and 269–288; these read NRLH…SLQD and HFPSPLPTPLDPDDTAYANI. Ser-133 carries the phosphoserine modification. Thr-143 bears the Phosphothreonine mark. Ser-145 carries the post-translational modification Phosphoserine; by SIK2. A compositionally biased stretch (polar residues) spans 145 to 159; that stretch reads SDSALHTSASSTKSQ. Residue Thr-151 is modified to Phosphothreonine. Phosphoserine is present on Ser-293. The segment at 299-462 is disordered; the sequence is AMTHLGISGS…QNYQPPSPVP (164 aa). A compositionally biased stretch (polar residues) spans 309–337; sequence PGMQNTRSNPSIQATMNNNSLASNVNSHT. The segment covering 344 to 365 has biased composition (low complexity); the sequence is PALHPSLRLSSLSNPSLPTSAL. Residues Ser-377 and Ser-396 each carry the phosphoserine modification. Polar residues predominate over residues 377–395; it reads SPLTLTPGSESNRSISNQF. The segment covering 396-407 has biased composition (low complexity); sequence SPTSPMNMPPNS. Residues 418–429 are compositionally biased toward pro residues; sequence SLPPLEPPPPYP. The span at 430 to 447 shows a compositional bias: low complexity; sequence LYSDQPQPHLHHTQQQMH. Ser-561 is subject to Phosphoserine. The tract at residues 615–637 is disordered; sequence MLSDPDMVLPDPSIEDSFRSDKL.

This sequence belongs to the TORC family. As to quaternary structure, binding, as a tetramer, through its N-terminal region, with the bZIP domain of creb1 enhances recruitment of taf4 to the promoter. 'Arg-300' in the bZIP domain of creb1 is essential for this interaction.

It is found in the nucleus. It localises to the cytoplasm. Transcriptional coactivator for creb1 which activates transcription through both consensus and variant cAMP response element (CRE) sites. Acts as a coactivator, in the SIK/TORC signaling pathway, being active when dephosphorylated and acts independently of creb1 'Ser-119' phosphorylation. Enhances the interaction of creb1 with taf4. Regulates the expression of specific CREB-activated genes such as the steroidogenic gene, StAR. Potent coactivator of ppargc1a and inducer of mitochondrial biogenesis in muscle cells. This Xenopus tropicalis (Western clawed frog) protein is CREB-regulated transcription coactivator 3 (crtc3).